A 226-amino-acid polypeptide reads, in one-letter code: ATP synthase F(0) complex subunit a (226 aa).

The next 6 helical transmembrane spans lie at 6-26 (FASF…IVLF), 68-88 (WALM…LGLL), 97-117 (QLSM…ITGF), 138-158 (IPML…ALAV), 164-184 (ITAG…LMSI), and 189-209 (ALIT…VAMI).

The protein belongs to the ATPase A chain family. Component of the ATP synthase complex composed at least of ATP5F1A/subunit alpha, ATP5F1B/subunit beta, ATP5MC1/subunit c (homooctomer), MT-ATP6/subunit a, MT-ATP8/subunit 8, ATP5ME/subunit e, ATP5MF/subunit f, ATP5MG/subunit g, ATP5MK/subunit k, ATP5MJ/subunit j, ATP5F1C/subunit gamma, ATP5F1D/subunit delta, ATP5F1E/subunit epsilon, ATP5PF/subunit F6, ATP5PB/subunit b, ATP5PD/subunit d, ATP5PO/subunit OSCP. ATP synthase complex consists of a soluble F(1) head domain (subunits alpha(3) and beta(3)) - the catalytic core - and a membrane F(0) domain - the membrane proton channel (subunits c, a, 8, e, f, g, k and j). These two domains are linked by a central stalk (subunits gamma, delta, and epsilon) rotating inside the F1 region and a stationary peripheral stalk (subunits F6, b, d, and OSCP). Interacts with DNAJC30; interaction is direct.

It is found in the mitochondrion inner membrane. The catalysed reaction is H(+)(in) = H(+)(out). Subunit a, of the mitochondrial membrane ATP synthase complex (F(1)F(0) ATP synthase or Complex V) that produces ATP from ADP in the presence of a proton gradient across the membrane which is generated by electron transport complexes of the respiratory chain. ATP synthase complex consist of a soluble F(1) head domain - the catalytic core - and a membrane F(1) domain - the membrane proton channel. These two domains are linked by a central stalk rotating inside the F(1) region and a stationary peripheral stalk. During catalysis, ATP synthesis in the catalytic domain of F(1) is coupled via a rotary mechanism of the central stalk subunits to proton translocation. With the subunit c (ATP5MC1), forms the proton-conducting channel in the F(0) domain, that contains two crucial half-channels (inlet and outlet) that facilitate proton movement from the mitochondrial intermembrane space (IMS) into the matrix. Protons are taken up via the inlet half-channel and released through the outlet half-channel, following a Grotthuss mechanism. The sequence is that of ATP synthase F(0) complex subunit a from Ovis aries (Sheep).